Here is a 227-residue protein sequence, read N- to C-terminus: uncharacterized protein (227 aa).

The next 5 helical transmembrane spans lie at 27-47 (AVLP…FPLL), 63-83 (PAPP…AVLG), 126-146 (TIIL…IAGV), 153-173 (VFLG…TLAG), and 186-206 (FQLI…VSAA).

Belongs to the DedA family.

It localises to the cell membrane. This is an uncharacterized protein from Mycobacterium tuberculosis (strain CDC 1551 / Oshkosh).